The sequence spans 95 residues: NELL2-interacting cell ontogeny regulator 1 (95 aa).

Residues 1-34 form the signal peptide; the sequence is MAPPPACRSPMSPPPPPLLLLLLSLALLGARARA.

The protein belongs to the NICOL family. In terms of assembly, interacts with NELL2; triggers epididymal differentiation. Interacts with cell surface receptor TFRC; the interaction mediates uptake of NICOL1 into fibroblasts. Detected in the brain (at protein level). Also expressed at low levels in the kidney, primarily in tubular epithelial cells.

The protein localises to the secreted. Its subcellular location is the cytoplasm. It is found in the perinuclear region. Functionally, mRNA-binding protein which interacts with a range of target mRNAs including SERPINE1, ACTA2, CCN2 and COL4A1 and may promote extracellular matrix production. Binds to the 3'-UTR of SERPINE1 mRNA and stabilizes the mRNA, possibly by competing for binding with SERBP1 and preventing SERBP1-mediated mRNA degradation. Also binds to the 3'-UTR of ACTA2. Testis-derived lumicrine factor that triggers epididymal differentiation and sperm maturation. The sequence is that of NELL2-interacting cell ontogeny regulator 1 from Homo sapiens (Human).